A 691-amino-acid polypeptide reads, in one-letter code: DNA ligase (691 aa).

Residues Asp41–Asp45, Ser90–Leu91, and Glu130 contribute to the NAD(+) site. Lys132 (N6-AMP-lysine intermediate) is an active-site residue. Arg153, Glu190, Lys307, and Lys331 together coordinate NAD(+). 4 residues coordinate Zn(2+): Cys425, Cys428, Cys443, and Cys449. A BRCT domain is found at Ala610–Pro691.

It belongs to the NAD-dependent DNA ligase family. LigA subfamily. Mg(2+) is required as a cofactor. Requires Mn(2+) as cofactor.

It catalyses the reaction NAD(+) + (deoxyribonucleotide)n-3'-hydroxyl + 5'-phospho-(deoxyribonucleotide)m = (deoxyribonucleotide)n+m + AMP + beta-nicotinamide D-nucleotide.. Functionally, DNA ligase that catalyzes the formation of phosphodiester linkages between 5'-phosphoryl and 3'-hydroxyl groups in double-stranded DNA using NAD as a coenzyme and as the energy source for the reaction. It is essential for DNA replication and repair of damaged DNA. In Burkholderia lata (strain ATCC 17760 / DSM 23089 / LMG 22485 / NCIMB 9086 / R18194 / 383), this protein is DNA ligase.